The chain runs to 311 residues: MSAVWMDEQVESSARVQNSLKIEREDHKLEKRLCREVGRAIVDFNMIEEGDKVMVCVSGGKDSYAMLDILLKLQKRAPIRFDLIAVNLDQKQPGFPKHVLPDYLGKLDVPFHIENQDTYSIVKRVIPEGKTLCSLCSRLRRGILYRVAGELGATKIALGHHRDDMLQTFFLNMFFAAKLKGMPPKLVSDDGKNIVIRPMAYVPEKDLTRWAQVRDFPIIPCTLCGSQENLQRKQVGNMLREWEKKHSGRLENMFSALQNIVPSHLMDSKRHDFKNIRTTGVADAEGDKAFDAEEFSEPQRPGLSVIDIASR.

The PP-loop motif motif lies at 58–63 (SGGKDS). 3 residues coordinate [4Fe-4S] cluster: Cys133, Cys136, and Cys224.

Belongs to the TtcA family. In terms of assembly, homodimer. Mg(2+) serves as cofactor. [4Fe-4S] cluster is required as a cofactor.

It localises to the cytoplasm. The catalysed reaction is cytidine(32) in tRNA + S-sulfanyl-L-cysteinyl-[cysteine desulfurase] + AH2 + ATP = 2-thiocytidine(32) in tRNA + L-cysteinyl-[cysteine desulfurase] + A + AMP + diphosphate + H(+). Its pathway is tRNA modification. In terms of biological role, catalyzes the ATP-dependent 2-thiolation of cytidine in position 32 of tRNA, to form 2-thiocytidine (s(2)C32). The sulfur atoms are provided by the cysteine/cysteine desulfurase (IscS) system. This chain is tRNA-cytidine(32) 2-sulfurtransferase, found in Polaromonas sp. (strain JS666 / ATCC BAA-500).